The chain runs to 131 residues: Arsenate reductase (131 aa).

Residues Cys10, Cys82, and Cys89 each act as nucleophile in the active site. 2 disulfides stabilise this stretch: Cys10–Cys82 and Cys82–Cys89.

The protein belongs to the low molecular weight phosphotyrosine protein phosphatase family. Thioredoxin-coupled ArsC subfamily.

The protein localises to the cytoplasm. It catalyses the reaction arsenate + [thioredoxin]-dithiol + H(+) = arsenite + [thioredoxin]-disulfide + H2O. Catalyzes the reduction of arsenate [As(V)] to arsenite [As(III)]. This chain is Arsenate reductase, found in Staphylococcus aureus (strain bovine RF122 / ET3-1).